Consider the following 223-residue polypeptide: N-(5'-phosphoribosyl)anthranilate isomerase (223 aa).

This sequence belongs to the TrpF family.

It carries out the reaction N-(5-phospho-beta-D-ribosyl)anthranilate = 1-(2-carboxyphenylamino)-1-deoxy-D-ribulose 5-phosphate. Its pathway is amino-acid biosynthesis; L-tryptophan biosynthesis; L-tryptophan from chorismate: step 3/5. This chain is N-(5'-phosphoribosyl)anthranilate isomerase, found in Bradyrhizobium diazoefficiens (strain JCM 10833 / BCRC 13528 / IAM 13628 / NBRC 14792 / USDA 110).